Consider the following 111-residue polypeptide: Rubredoxin (111 aa).

Residues 11-62 (LDRFECRSCGYVYEPEKGDNKHDIAPETPFAELPINWRCPVCTAKKAAFTNI) enclose the Rubredoxin-like domain. The Fe cation site is built by cysteine 16, cysteine 19, cysteine 49, and cysteine 52.

The protein belongs to the rubredoxin family. It depends on Fe(3+) as a cofactor.

Its function is as follows. Rubredoxin is a small nonheme, iron protein lacking acid-labile sulfide. Its single Fe, chelated to 4 Cys, functions as an electron acceptor and may also stabilize the conformation of the molecule. Could be involved in hydrogenase-linked redox processes. This Nostoc sp. (strain PCC 7120 / SAG 25.82 / UTEX 2576) protein is Rubredoxin (rub).